Consider the following 224-residue polypeptide: Metalloproteinase inhibitor 4 (224 aa).

The first 29 residues, 1–29 (MPWSPLAALSWALVLRLLALLWPPGRGEA), serve as a signal peptide directing secretion. Residue Cys-30 participates in Zn(2+) binding. Involved in metalloproteinase-binding regions lie at residues 30 to 33 (CSCA) and 99 to 100 (SS). 6 disulfides stabilise this stretch: Cys-30–Cys-102, Cys-32–Cys-131, Cys-42–Cys-156, Cys-158–Cys-205, Cys-163–Cys-168, and Cys-176–Cys-197. One can recognise an NTR domain in the interval 30 to 156 (CSCAPAHPQQ…SLNHHYHQNC (127 aa)).

Belongs to the protease inhibitor I35 (TIMP) family. As to expression, expressed in brain, heart, ovary and skeletal muscle.

Its subcellular location is the secreted. Functionally, complexes with metalloproteinases (such as collagenases) and irreversibly inactivates them by binding to their catalytic zinc cofactor. This is Metalloproteinase inhibitor 4 (Timp4) from Mus musculus (Mouse).